Reading from the N-terminus, the 467-residue chain is DNA methyltransferase 1-associated protein 1 (467 aa).

Basic and acidic residues-rich tracts occupy residues 1–11 (MATGADVRDIL) and 26–48 (SKKD…LTFK). The segment at 1–48 (MATGADVRDILELGGPEGDAASGTISKKDIINPDKKKSKKSSETLTFK) is disordered. Lys27 is covalently cross-linked (Glycyl lysine isopeptide (Lys-Gly) (interchain with G-Cter in SUMO2)). An SANT domain is found at 149 to 199 (DDAWTKAETDHLFDLSRRFDLRFVVIHDRYDHQQFKKRSVEDLKERYYHIC). Residue Lys214 forms a Glycyl lysine isopeptide (Lys-Gly) (interchain with G-Cter in SUMO2) linkage. Residues 225-275 (RRKEQLERLYNRTPEQVAEEEYLLQELRKIEARKKEREKRSQDLQKLITAA) adopt a coiled-coil conformation. A compositionally biased stretch (basic and acidic residues) spans 258–267 (KKEREKRSQD). Disordered regions lie at residues 258–305 (KKER…PAVP) and 404–467 (LGGP…AKKP). A compositionally biased stretch (low complexity) spans 406 to 422 (GPATPASGPGPASAEPA). Thr445 is subject to Phosphothreonine. A Phosphoserine modification is found at Ser448.

In terms of assembly, component of the NuA4 histone acetyltransferase complex which contains the catalytic subunit KAT5/TIP60 and the subunits EP400, TRRAP/PAF400, BRD8/SMAP, EPC1, DMAP1/DNMAP1, RUVBL1/TIP49, RUVBL2, ING3, actin, ACTL6A/BAF53A, MORF4L1/MRG15, MORF4L2/MRGX, MRGBP, YEATS4/GAS41, VPS72/YL1 and MEAF6. Component of a NuA4-related complex which contains EP400, TRRAP/PAF400, SRCAP, BRD8/SMAP, EPC1, DMAP1/DNMAP1, RUVBL1/TIP49, RUVBL2, actin, ACTL6A/BAF53A, VPS72 and YEATS4/GAS41. DMAP1 also forms a complex with DNMT1 and HDAC2. Throughout S phase it interacts directly with the N-terminus of DNMT1, which serves to recruit DMAP1 to replication foci. DMAP1 interacts with ING1, a component of the mSin3A transcription repressor complex, although this interaction is not required for recruitment of ING1 to heterochromatin. Interacts directly with the transcriptional corepressor TSG101. Interacts with the pro-apoptotic protein DAXX. Interacts with URI1.

The protein resides in the nucleus. It localises to the cytoplasm. Functionally, involved in transcription repression and activation. Its interaction with HDAC2 may provide a mechanism for histone deacetylation in heterochromatin following replication of DNA at late firing origins. Can also repress transcription independently of histone deacetylase activity. May specifically potentiate DAXX-mediated repression of glucocorticoid receptor-dependent transcription. Component of the NuA4 histone acetyltransferase (HAT) complex which is involved in transcriptional activation of select genes principally by acetylation of nucleosomal histones H4 and H2A. This modification may both alter nucleosome - DNA interactions and promote interaction of the modified histones with other proteins which positively regulate transcription. This complex may be required for the activation of transcriptional programs associated with oncogene and proto-oncogene mediated growth induction, tumor suppressor mediated growth arrest and replicative senescence, apoptosis, and DNA repair. NuA4 may also play a direct role in DNA repair when recruited to sites of DNA damage. Participates in the nuclear localization of URI1 and increases its transcriptional corepressor activity. The sequence is that of DNA methyltransferase 1-associated protein 1 (DMAP1) from Homo sapiens (Human).